The following is a 72-amino-acid chain: Small proline-rich protein 2D (72 aa).

The span at 1–11 shows a compositional bias: low complexity; it reads MSYQQQQCKQP. Residues 1–20 form a disordered region; sequence MSYQQQQCKQPCQPPPVCPT. Tandem repeats lie at residues 21-29, 30-38, and 39-47. The tract at residues 21–47 is 3 X 9 AA tandem repeats of P-K-C-P-[EQ]-P-C-P-[PS]; sequence PKCPEPCPPPKCPEPCPSPKCPQPCPP. 2 stretches are compositionally biased toward pro residues: residues 33-47 and 56-72; these read PEPC…PCPP and PVTP…PKSK. The interval 33-72 is disordered; it reads PEPCPSPKCPQPCPPQQCQQKYPPVTPSPPCQPKCPPKSK.

It belongs to the cornifin (SPRR) family.

It is found in the cytoplasm. Functionally, cross-linked envelope protein of keratinocytes. It is a keratinocyte protein that first appears in the cell cytosol, but ultimately becomes cross-linked to membrane proteins by transglutaminase. All that results in the formation of an insoluble envelope beneath the plasma membrane. This Homo sapiens (Human) protein is Small proline-rich protein 2D (SPRR2D).